Reading from the N-terminus, the 681-residue chain is DNA-directed RNA polymerase subunit beta' (681 aa).

Zn(2+)-binding residues include cysteine 69, cysteine 71, cysteine 87, and cysteine 90. Mg(2+) contacts are provided by aspartate 489, aspartate 491, and aspartate 493.

Belongs to the RNA polymerase beta' chain family. RpoC1 subfamily. In plastids the minimal PEP RNA polymerase catalytic core is composed of four subunits: alpha, beta, beta', and beta''. When a (nuclear-encoded) sigma factor is associated with the core the holoenzyme is formed, which can initiate transcription. The cofactor is Mg(2+). Zn(2+) is required as a cofactor.

It is found in the plastid. The protein localises to the chloroplast. It carries out the reaction RNA(n) + a ribonucleoside 5'-triphosphate = RNA(n+1) + diphosphate. In terms of biological role, DNA-dependent RNA polymerase catalyzes the transcription of DNA into RNA using the four ribonucleoside triphosphates as substrates. This Anthoceros angustus (Hornwort) protein is DNA-directed RNA polymerase subunit beta'.